A 184-amino-acid chain; its full sequence is ATP-dependent protease subunit HslV (184 aa).

Thr-12 is an active-site residue. Na(+)-binding residues include Ala-166, Cys-169, and Thr-172.

The protein belongs to the peptidase T1B family. HslV subfamily. In terms of assembly, a double ring-shaped homohexamer of HslV is capped on each side by a ring-shaped HslU homohexamer. The assembly of the HslU/HslV complex is dependent on binding of ATP.

The protein localises to the cytoplasm. The enzyme catalyses ATP-dependent cleavage of peptide bonds with broad specificity.. With respect to regulation, allosterically activated by HslU binding. Functionally, protease subunit of a proteasome-like degradation complex believed to be a general protein degrading machinery. This is ATP-dependent protease subunit HslV from Brucella canis (strain ATCC 23365 / NCTC 10854 / RM-666).